A 124-amino-acid polypeptide reads, in one-letter code: Large ribosomal subunit protein bL12 (124 aa).

It belongs to the bacterial ribosomal protein bL12 family. Homodimer. Part of the ribosomal stalk of the 50S ribosomal subunit. Forms a multimeric L10(L12)X complex, where L10 forms an elongated spine to which 2 to 4 L12 dimers bind in a sequential fashion. Binds GTP-bound translation factors.

In terms of biological role, forms part of the ribosomal stalk which helps the ribosome interact with GTP-bound translation factors. Is thus essential for accurate translation. The protein is Large ribosomal subunit protein bL12 of Burkholderia lata (strain ATCC 17760 / DSM 23089 / LMG 22485 / NCIMB 9086 / R18194 / 383).